Reading from the N-terminus, the 532-residue chain is 5-methylcytosine-modifying enzyme 1 (532 aa).

335 to 337 (SLT) serves as a coordination point for L-ascorbate. Residues H345, D347, and H397 each coordinate Fe cation. Position 397-399 (397-399 (HGT)) interacts with L-ascorbate.

Belongs to the TET family. The cofactor is Fe(2+).

The protein localises to the nucleus. It carries out the reaction a 5-methyl-2'-deoxycytidine in DNA + L-ascorbate + O2 = a (8S,9S)-5-glyceryl-2'-deoxycytidine in DNA + glyoxylate + CO2. The enzyme catalyses a 5-methyl-2'-deoxycytidine in DNA + L-ascorbate + O2 = a (8S,9R)-5-glyceryl-2'-deoxycytidine in DNA + glyoxylate + CO2. Dioxygenase that catalyzes DNA modification by mediating the conversion of the modified genomic base 5-methylcytosine (5mC) into 5-glyceryl-methylcytosine (5gmC). Catalyzes the conjugation of a glyceryl moiety from L-ascorbate (vitamin C) to the methyl group of 5mC through a carbon-carbon bond. 5gmC DNA modification may be required during photosynthesis as an epigenetic mark that couteracts DNA methylation. The chain is 5-methylcytosine-modifying enzyme 1 from Chlamydomonas reinhardtii (Chlamydomonas smithii).